Reading from the N-terminus, the 149-residue chain is MKLILREDVENLGKGGDLVDVKPGYGRNFLLPRGLAVTANPKNVKELEHQKAVAAAKAAKLKASAQAVAKRLSETPVTLKRKVGEQDKLYGSVTALDVAEALAARGVQLDRRSIVLDEPIKTVGEFEVPVKLHSEVAGKVKVTVEAEAE.

The protein belongs to the bacterial ribosomal protein bL9 family.

Functionally, binds to the 23S rRNA. The sequence is that of Large ribosomal subunit protein bL9 from Anaeromyxobacter dehalogenans (strain 2CP-1 / ATCC BAA-258).